The following is a 234-amino-acid chain: 2-C-methyl-D-erythritol 4-phosphate cytidylyltransferase (234 aa).

Belongs to the IspD/TarI cytidylyltransferase family. IspD subfamily.

The enzyme catalyses 2-C-methyl-D-erythritol 4-phosphate + CTP + H(+) = 4-CDP-2-C-methyl-D-erythritol + diphosphate. It participates in isoprenoid biosynthesis; isopentenyl diphosphate biosynthesis via DXP pathway; isopentenyl diphosphate from 1-deoxy-D-xylulose 5-phosphate: step 2/6. Its function is as follows. Catalyzes the formation of 4-diphosphocytidyl-2-C-methyl-D-erythritol from CTP and 2-C-methyl-D-erythritol 4-phosphate (MEP). The protein is 2-C-methyl-D-erythritol 4-phosphate cytidylyltransferase of Pseudomonas aeruginosa (strain ATCC 15692 / DSM 22644 / CIP 104116 / JCM 14847 / LMG 12228 / 1C / PRS 101 / PAO1).